Reading from the N-terminus, the 523-residue chain is MVPPRRHRGAGRPGVLSSSPPFRLRSAKFSGIALEDLRRALKTRLQMVCVFIMNRMNSQNSGFTQRRRMALGIVILLLVDVIWVASSELTSYVFTQYNKPFFSTFAKTSMFVLYLLGFIIWKPWRQQCTRGLRGKHAAFFADAEGYFAACATDTTMNSSLSEPLYVPVKFHDLPSEKPESTNIDTEKTPKKSRVRFSNIMEIRQLPSNHALESKLSRMSYPVKEQESILKTVGKLTATQVAKISFFFCFVWFLANLSYQEALSDTQVAIVNILSSTSGLFTLILAAVFPSNSGDRFTLSKLLAVILSIGGVVLVNLSGSEKSAGRDTIGSIWSLAGAMLYAVYIVMIKRKVDREDKLDIPMFFGFVGLFNLLLLWPGFFLLHYTGFEDFEFPNKVVLMCIIINGLIGTVLSEFLWLWGCFLTSSLIGTLALSLTIPLSIIADMCMQKVQFSWLFFAGAIPVFFSFFIVTLLCHYNNWDPVMVGIRRIFAFICRKHRIQRVPEDSEQCESLISMHSVSQEDGDS.

2 helical membrane-spanning segments follow: residues 69 to 89 (MALG…SSEL) and 101 to 121 (FFST…FIIW). Serine 207 is subject to Phosphoserine. 8 helical membrane passes run 243–263 (ISFF…EALS), 268–288 (AIVN…AAVF), 296–316 (FTLS…LVNL), 327–347 (TIGS…IVMI), 361–381 (MFFG…FFLL), 395–415 (VVLM…EFLW), 420–440 (FLTS…LSII), and 452–472 (WLFF…TLLC). In terms of domain architecture, EamA spans 252-316 (FLANLSYQEA…SIGGVVLVNL (65 aa)).

Belongs to the SLC35F solute transporter family.

It localises to the membrane. In terms of biological role, putative solute transporter. The polypeptide is Solute carrier family 35 member F5 (SLC35F5) (Pongo abelii (Sumatran orangutan)).